The following is a 42-amino-acid chain: Photosystem II reaction center protein J (42 aa).

A helical membrane pass occupies residues 10–30 (IPLWLVATVAGLAVIALLGVF).

Belongs to the PsbJ family. PSII is composed of 1 copy each of membrane proteins PsbA, PsbB, PsbC, PsbD, PsbE, PsbF, PsbH, PsbI, PsbJ, PsbK, PsbL, PsbM, PsbT, PsbX, PsbY, PsbZ, Psb30/Ycf12, at least 3 peripheral proteins of the oxygen-evolving complex and a large number of cofactors. It forms dimeric complexes.

The protein resides in the plastid. It localises to the chloroplast thylakoid membrane. One of the components of the core complex of photosystem II (PSII). PSII is a light-driven water:plastoquinone oxidoreductase that uses light energy to abstract electrons from H(2)O, generating O(2) and a proton gradient subsequently used for ATP formation. It consists of a core antenna complex that captures photons, and an electron transfer chain that converts photonic excitation into a charge separation. The polypeptide is Photosystem II reaction center protein J (Chlorokybus atmophyticus (Soil alga)).